The primary structure comprises 337 residues: Holliday junction branch migration complex subunit RuvB (337 aa).

The interval 1–182 (MEDRMVSASY…FGVLSAMEFY (182 aa)) is large ATPase domain (RuvB-L). L21, R22, G63, K66, T67, T68, R172, Y182, and R219 together coordinate ATP. Residue T67 participates in Mg(2+) binding. Residues 183 to 253 (NEDELKEIIL…IAKNALSLLE (71 aa)) are small ATPAse domain (RuvB-S). The tract at residues 256-337 (GEGFDKIDNK…REFKEQTKLT (82 aa)) is head domain (RuvB-H). Positions 311 and 316 each coordinate DNA.

The protein belongs to the RuvB family. As to quaternary structure, homohexamer. Forms an RuvA(8)-RuvB(12)-Holliday junction (HJ) complex. HJ DNA is sandwiched between 2 RuvA tetramers; dsDNA enters through RuvA and exits via RuvB. An RuvB hexamer assembles on each DNA strand where it exits the tetramer. Each RuvB hexamer is contacted by two RuvA subunits (via domain III) on 2 adjacent RuvB subunits; this complex drives branch migration. In the full resolvosome a probable DNA-RuvA(4)-RuvB(12)-RuvC(2) complex forms which resolves the HJ.

The protein resides in the cytoplasm. The enzyme catalyses ATP + H2O = ADP + phosphate + H(+). Functionally, the RuvA-RuvB-RuvC complex processes Holliday junction (HJ) DNA during genetic recombination and DNA repair, while the RuvA-RuvB complex plays an important role in the rescue of blocked DNA replication forks via replication fork reversal (RFR). RuvA specifically binds to HJ cruciform DNA, conferring on it an open structure. The RuvB hexamer acts as an ATP-dependent pump, pulling dsDNA into and through the RuvAB complex. RuvB forms 2 homohexamers on either side of HJ DNA bound by 1 or 2 RuvA tetramers; 4 subunits per hexamer contact DNA at a time. Coordinated motions by a converter formed by DNA-disengaged RuvB subunits stimulates ATP hydrolysis and nucleotide exchange. Immobilization of the converter enables RuvB to convert the ATP-contained energy into a lever motion, pulling 2 nucleotides of DNA out of the RuvA tetramer per ATP hydrolyzed, thus driving DNA branch migration. The RuvB motors rotate together with the DNA substrate, which together with the progressing nucleotide cycle form the mechanistic basis for DNA recombination by continuous HJ branch migration. Branch migration allows RuvC to scan DNA until it finds its consensus sequence, where it cleaves and resolves cruciform DNA. In Clostridium novyi (strain NT), this protein is Holliday junction branch migration complex subunit RuvB.